An 840-amino-acid polypeptide reads, in one-letter code: Probable sulfate permease C869.05c (840 aa).

The next 12 helical transmembrane spans lie at 120–140 (WLIN…PQGM), 148–168 (LPSE…CFFA), 173–193 (VSIG…ANVM), 208–228 (LALL…GFII), 230–250 (FIPV…ILSG), 278–298 (LPDT…LFFT), 315–335 (AFFL…TAIS), 410–430 (LIAM…PATG), 447–467 (IAGI…TDAF), 470–490 (IPNA…ILPM), 505–525 (CIFF…GIYV), and 527–547 (VCLA…SFLG). One can recognise an STAS domain in the interval 578–733 (NLEIQSPPPG…CVEVAAPLRD (156 aa)). Phosphoserine is present on serine 823.

Belongs to the SLC26A/SulP transporter (TC 2.A.53) family.

Its subcellular location is the membrane. Functionally, high affinity uptake of sulfate into the cell. This is Probable sulfate permease C869.05c from Schizosaccharomyces pombe (strain 972 / ATCC 24843) (Fission yeast).